The following is a 512-amino-acid chain: Bestrophin-2 (512 aa).

Residues 1 to 31 are Cytoplasmic-facing; it reads MTVTYTARVAKARFGGFSKLLLLWRGSIYKL. Ala10 lines the Ca(2+) pocket. Residues 32–51 form a helical membrane-spanning segment; the sequence is LWRELLCFLGLFMALSAAYR. Over 52–60 the chain is Extracellular; the sequence is FVLTEEQKR. The helical transmembrane segment at 61-82 threads the bilayer; the sequence is YFEKLVLYCDRYASLIPVSFVL. Residues 83-238 lie on the Cytoplasmic side of the membrane; the sequence is GFYVTLVVHR…WISVPLVYTQ (156 aa). The chain crosses the membrane as a helical span at residues 239–255; it reads VVTIAVYSYFLACLIGR. Residues 256–274 lie on the Extracellular side of the membrane; it reads QFLDPAQGYKDHDLDLCVP. A helical transmembrane segment spans residues 275–288; that stretch reads IFTLLQFFFYAGWL. Residues 289-512 are Cytoplasmic-facing; it reads KVAEQLINPF…PIGEEEESLA (224 aa). Residues Gln293, Asn296, Asp301, and Asp304 each contribute to the Ca(2+) site. Residues 453–512 are disordered; that stretch reads VDLGQPEPESEPITGPESPALVPAPRAPSEPLTVVPLSGTRGPAPPWLPSPIGEEEESLA.

This sequence belongs to the anion channel-forming bestrophin (TC 1.A.46) family. Calcium-sensitive chloride channel subfamily. As to quaternary structure, pentamer. Interacts with GLUL; this interaction tethers a fraction of GLUL to the membrane, causing a decrease of cytosolic glutamine synthase (GS) activity and inhibits the chloride channel activity of BEST2 by affecting the gating at the aperture in the absence of intracellular glutamate.

Its subcellular location is the cell membrane. The protein resides in the basolateral cell membrane. The enzyme catalyses chloride(in) = chloride(out). It catalyses the reaction iodide(out) = iodide(in). The catalysed reaction is hydrogencarbonate(in) = hydrogencarbonate(out). It carries out the reaction L-glutamate(out) = L-glutamate(in). The enzyme catalyses L-glutamine(out) = L-glutamine(in). Chloride channel activity is allosterically inhibited by GLUL/glutamine synthase (GS) which affects the gating at the aperture in the absence of intracellular glutamate. Inhibitory effect of GLUL is relieved upon increasing of intracellular level of L-glutamate. Its function is as follows. Ligand-gated anion channel that allows the movement of anions across cell membranes when activated by calcium (Ca2+). Transports a large specter of anions, namely mediates the movement of chloride, L-glutamate and iodide. Calcium-binding triggers the dilation of the aperture, but calcium-dependent gating is only effective when the size of the passing anion is bigger than the closed aperture. Mediates the calcium-activated hydrogencarbonate movement and participates in colonic hydrogencarbonate secretion concomitant with mucin secretion. In non-pigmented epithelium (NPE), mediates the efflux of intracellular L-glutamate; binding of intracellular L-glutamate activates and open both the neck and the aperture of the channel, leading to L-glutamate exit promoting chloride influx movement from the extracellular side in trans. Also exhibits a directional permeability for intracellular glutamine, in a similar manner as for L-glutamate. This Bos taurus (Bovine) protein is Bestrophin-2.